The primary structure comprises 124 residues: Calvin cycle protein CP12-1, chloroplastic (124 aa).

Residues methionine 1 to alanine 47 constitute a chloroplast transit peptide. Intrachain disulfides connect cysteine 68–cysteine 77 and cysteine 110–cysteine 119. The disordered stretch occupies residues alanine 90 to asparagine 124. The span at proline 105 to threonine 116 shows a compositional bias: acidic residues.

Belongs to the CP12 family. As to quaternary structure, monomer. Component of a complex that contains two dimers of PRK, two tetramers of GAPDH and CP12. CP12 associates with GAPDH, causing its conformation to change. This GAPDH/CP12 complex binds PRK to form a half-complex (one unit). This unit probably dimerizes due partially to interactions between the enzymes of each unit. Post-translationally, contains two disulfide bonds; only the oxidized protein, with two disulfide bonds, is active in complex formation. The C-terminal disulfide is involved in the interaction with GAPDH and the N-terminal disulfide mediates the binding of PRK with this binary complex. In terms of tissue distribution, mostly expressed in flowers, hypocotyl, cotyledons, leaves, stems, and flower stalks. Barely detectable in roots and siliques. Present in root tips and lateral roots. Accumulates in the cotyledons of etiolated seedlings.

It localises to the plastid. It is found in the chloroplast. In terms of biological role, acts as a linker essential in the assembly of a core complex of PRK/GAPDH. Coordinates the reversible inactivation of chloroplast enzymes GAPDH and PRK during darkness in photosynthetic tissues. In Arabidopsis thaliana (Mouse-ear cress), this protein is Calvin cycle protein CP12-1, chloroplastic (CP12-1).